Here is a 143-residue protein sequence, read N- to C-terminus: FAD synthase (143 aa).

Residues Thr13–Phe14, His18–His21, and Asp96 each bind ATP.

The protein belongs to the archaeal FAD synthase family. As to quaternary structure, homodimer. A divalent metal cation is required as a cofactor.

The catalysed reaction is FMN + ATP + H(+) = FAD + diphosphate. It functions in the pathway cofactor biosynthesis; FAD biosynthesis; FAD from FMN: step 1/1. Its function is as follows. Catalyzes the transfer of the AMP portion of ATP to flavin mononucleotide (FMN) to produce flavin adenine dinucleotide (FAD) coenzyme. This Methanothrix thermoacetophila (strain DSM 6194 / JCM 14653 / NBRC 101360 / PT) (Methanosaeta thermophila) protein is FAD synthase.